The sequence spans 282 residues: F-actin-capping protein subunit alpha (282 aa).

It belongs to the F-actin-capping protein alpha subunit family. Component of the F-actin capping complex, composed of a heterodimer of an alpha and a beta subunit.

It localises to the cytoplasm. It is found in the cytoskeleton. In terms of biological role, F-actin-capping proteins bind in a Ca(2+)-independent manner to the fast growing ends of actin filaments (barbed end) thereby blocking the exchange of subunits at these ends. Unlike other capping proteins (such as gelsolin and severin), these proteins do not sever actin filaments. This Caenorhabditis elegans protein is F-actin-capping protein subunit alpha (cap-1).